The chain runs to 373 residues: Histidinol-phosphate aminotransferase (373 aa).

The span at 1–10 (MTGVPGSSIT) shows a compositional bias: polar residues. A disordered region spans residues 1-45 (MTGVPGSSITLDDLPLRDDLRGKSPYGAPQLSVPVRLNTNENPHP). At Lys237 the chain carries N6-(pyridoxal phosphate)lysine.

Belongs to the class-II pyridoxal-phosphate-dependent aminotransferase family. Histidinol-phosphate aminotransferase subfamily. As to quaternary structure, homodimer. It depends on pyridoxal 5'-phosphate as a cofactor.

The catalysed reaction is L-histidinol phosphate + 2-oxoglutarate = 3-(imidazol-4-yl)-2-oxopropyl phosphate + L-glutamate. The protein operates within amino-acid biosynthesis; L-histidine biosynthesis; L-histidine from 5-phospho-alpha-D-ribose 1-diphosphate: step 7/9. The protein is Histidinol-phosphate aminotransferase of Mycolicibacterium vanbaalenii (strain DSM 7251 / JCM 13017 / BCRC 16820 / KCTC 9966 / NRRL B-24157 / PYR-1) (Mycobacterium vanbaalenii).